A 262-amino-acid chain; its full sequence is Ribose-5-phosphate isomerase A (262 aa).

Residues 33 to 36 (TGST), 89 to 92 (DGTD), and 102 to 105 (KGGG) contribute to the substrate site. Glutamate 111 (proton acceptor) is an active-site residue. A substrate-binding site is contributed by lysine 129.

The protein belongs to the ribose 5-phosphate isomerase family. Homodimer.

It carries out the reaction aldehydo-D-ribose 5-phosphate = D-ribulose 5-phosphate. The protein operates within carbohydrate degradation; pentose phosphate pathway; D-ribose 5-phosphate from D-ribulose 5-phosphate (non-oxidative stage): step 1/1. Functionally, catalyzes the reversible conversion of ribose-5-phosphate to ribulose 5-phosphate. This Jannaschia sp. (strain CCS1) protein is Ribose-5-phosphate isomerase A.